Consider the following 248-residue polypeptide: Ribonuclease 3 (248 aa).

An RNase III domain is found at 15-142; it reads LKAFFKQYHV…MIAALYLDLG (128 aa). Position 55 (Glu-55) interacts with Mg(2+). Asp-59 is a catalytic residue. Mg(2+) contacts are provided by Asp-128 and Glu-131. The active site involves Glu-131. The DRBM domain maps to 169 to 240; the sequence is DYKTELQEFL…ARDALQKLAT (72 aa).

This sequence belongs to the ribonuclease III family. In terms of assembly, homodimer. Mg(2+) is required as a cofactor.

The protein localises to the cytoplasm. The catalysed reaction is Endonucleolytic cleavage to 5'-phosphomonoester.. In terms of biological role, digests double-stranded RNA. Involved in the processing of primary rRNA transcript to yield the immediate precursors to the large and small rRNAs (23S and 16S). Processes some mRNAs, and tRNAs when they are encoded in the rRNA operon. Processes pre-crRNA and tracrRNA of type II CRISPR loci if present in the organism. This is Ribonuclease 3 from Spiroplasma citri.